A 61-amino-acid chain; its full sequence is Potassium channel toxin alpha-KTx 3.18 (61 aa).

An N-terminal signal peptide occupies residues 1–23 (MKMFFTVLVTLFVCSMIIGICEG). Intrachain disulfides connect Cys30–Cys50, Cys36–Cys55, and Cys40–Cys57. Lys60 is subject to Lysine amide.

In terms of tissue distribution, expressed by the venom gland.

The protein resides in the secreted. Functionally, inhibits voltage-gated potassium channel rKv1.1/KCNA1 at nanomolar ranges (IC(50)=90 +-2 nM, reduction of current by 30% at 50 nM or toxin). In Mesobuthus eupeus (Lesser Asian scorpion), this protein is Potassium channel toxin alpha-KTx 3.18.